The following is a 417-amino-acid chain: Serine hydroxymethyltransferase (417 aa).

(6S)-5,6,7,8-tetrahydrofolate contacts are provided by residues Leu121 and 125–127 (GHL). Lys229 is modified (N6-(pyridoxal phosphate)lysine). 355–357 (SPF) provides a ligand contact to (6S)-5,6,7,8-tetrahydrofolate.

It belongs to the SHMT family. As to quaternary structure, homodimer. Pyridoxal 5'-phosphate serves as cofactor.

It is found in the cytoplasm. It catalyses the reaction (6R)-5,10-methylene-5,6,7,8-tetrahydrofolate + glycine + H2O = (6S)-5,6,7,8-tetrahydrofolate + L-serine. It participates in one-carbon metabolism; tetrahydrofolate interconversion. It functions in the pathway amino-acid biosynthesis; glycine biosynthesis; glycine from L-serine: step 1/1. Functionally, catalyzes the reversible interconversion of serine and glycine with tetrahydrofolate (THF) serving as the one-carbon carrier. This reaction serves as the major source of one-carbon groups required for the biosynthesis of purines, thymidylate, methionine, and other important biomolecules. Also exhibits THF-independent aldolase activity toward beta-hydroxyamino acids, producing glycine and aldehydes, via a retro-aldol mechanism. The protein is Serine hydroxymethyltransferase of Aeromonas hydrophila subsp. hydrophila (strain ATCC 7966 / DSM 30187 / BCRC 13018 / CCUG 14551 / JCM 1027 / KCTC 2358 / NCIMB 9240 / NCTC 8049).